A 204-amino-acid chain; its full sequence is Protein GrpE (204 aa).

A disordered region spans residues 1–55 (MSSKNNPESETKAKNKWEKVMEAEEEQEEGRGDGSQEMEPHREGLEFPSREKLEG). Composition is skewed to basic and acidic residues over residues 7–22 (PESE…KVME) and 29–55 (EGRG…KLEG).

Belongs to the GrpE family. As to quaternary structure, homodimer.

Its subcellular location is the cytoplasm. Functionally, participates actively in the response to hyperosmotic and heat shock by preventing the aggregation of stress-denatured proteins, in association with DnaK and GrpE. It is the nucleotide exchange factor for DnaK and may function as a thermosensor. Unfolded proteins bind initially to DnaJ; upon interaction with the DnaJ-bound protein, DnaK hydrolyzes its bound ATP, resulting in the formation of a stable complex. GrpE releases ADP from DnaK; ATP binding to DnaK triggers the release of the substrate protein, thus completing the reaction cycle. Several rounds of ATP-dependent interactions between DnaJ, DnaK and GrpE are required for fully efficient folding. This is Protein GrpE from Coxiella burnetii (strain RSA 331 / Henzerling II).